Consider the following 739-residue polypeptide: TonB-dependent heme receptor A (739 aa).

A signal peptide spans 1 to 22 (MKMKKQCATLTFFIGLHGYTIA). Positions 38 to 150 (GHHERQPDRS…FAGTIKLETK (113 aa)) constitute a TBDR plug domain. In terms of domain architecture, TBDR beta-barrel spans 161 to 739 (LLGGLLKYGY…NIKLSISKQF (579 aa)).

It belongs to the TonB-dependent receptor family.

Its subcellular location is the cell outer membrane. In terms of biological role, heme receptor. This chain is TonB-dependent heme receptor A (tdhA), found in Haemophilus ducreyi (strain 35000HP / ATCC 700724).